The following is a 222-amino-acid chain: Triosephosphate isomerase (222 aa).

A substrate-binding site is contributed by 10-12 (NCK). His-93 (electrophile) is an active-site residue. The Proton acceptor role is filled by Glu-141. Residues Ile-146, Gly-180, and 201 to 202 (AS) contribute to the substrate site.

Belongs to the triosephosphate isomerase family. Homotetramer; dimer of dimers.

It localises to the cytoplasm. It catalyses the reaction D-glyceraldehyde 3-phosphate = dihydroxyacetone phosphate. It functions in the pathway carbohydrate biosynthesis; gluconeogenesis. It participates in carbohydrate degradation; glycolysis; D-glyceraldehyde 3-phosphate from glycerone phosphate: step 1/1. Functionally, involved in the gluconeogenesis. Catalyzes stereospecifically the conversion of dihydroxyacetone phosphate (DHAP) to D-glyceraldehyde-3-phosphate (G3P). The polypeptide is Triosephosphate isomerase (Cenarchaeum symbiosum (strain A)).